Here is a 363-residue protein sequence, read N- to C-terminus: Flagellar P-ring protein (363 aa).

The first 20 residues, 1–20 (MKYKLVLAVAVLVFSLPSQA), serve as a signal peptide directing secretion.

The protein belongs to the FlgI family. In terms of assembly, the basal body constitutes a major portion of the flagellar organelle and consists of four rings (L,P,S, and M) mounted on a central rod.

The protein resides in the periplasm. The protein localises to the bacterial flagellum basal body. Assembles around the rod to form the L-ring and probably protects the motor/basal body from shearing forces during rotation. The chain is Flagellar P-ring protein from Shewanella baltica (strain OS223).